The chain runs to 228 residues: uncharacterized protein (228 aa).

The protein localises to the mitochondrion. This is an uncharacterized protein from Emericella nidulans (Aspergillus nidulans).